We begin with the raw amino-acid sequence, 303 residues long: Tyrosine-protein phosphatase 3 (303 aa).

Residues 24-292 (YMIIEGLNEE…VFLYTVSQEL (269 aa)) form the Tyrosine-protein phosphatase domain. Residue C227 is the Phosphocysteine intermediate of the active site.

Belongs to the protein-tyrosine phosphatase family. Non-receptor class subfamily.

The protein localises to the cytoplasm. It carries out the reaction O-phospho-L-tyrosyl-[protein] + H2O = L-tyrosyl-[protein] + phosphate. Functionally, contributes to dephosphorylation of tyrosine 15 of cdc2. The chain is Tyrosine-protein phosphatase 3 (pyp3) from Schizosaccharomyces pombe (strain 972 / ATCC 24843) (Fission yeast).